Reading from the N-terminus, the 167-residue chain is Piercer of microtubule wall 1 protein (167 aa).

The tract at residues 1–54 (MSEEKPQQSAEEPEPGEPKAKPAPEEPEPGEPKAKPAPEEPEPGEPKAKPAPEK) is disordered. Residues 16–54 (GEPKAKPAPEEPEPGEPKAKPAPEEPEPGEPKAKPAPEK) are compositionally biased toward basic and acidic residues.

Belongs to the PIERCE1 family. Microtubule inner protein component of sperm flagellar doublet microtubules. Interacts with CFAP53, ODAD1 and ODAD3; the interactions link the outer dynein arms docking complex (ODA-DC) to the internal microtubule inner proteins (MIP) in cilium axoneme. In terms of tissue distribution, expressed in brain, lung, kidney and testis.

Its subcellular location is the cytoplasm. The protein resides in the cytoskeleton. It is found in the cilium axoneme. The protein localises to the flagellum axoneme. Its function is as follows. Microtubule inner protein involved in the attachment of outer dynein arms (ODAs) to dynein-decorated doublet microtubules (DMTs) in cilia axoneme. Functions at the initial step of left-right asymmetry specification of the visceral organs. The sequence is that of Piercer of microtubule wall 1 protein from Mus musculus (Mouse).